The primary structure comprises 474 residues: L-arabinose isomerase 2 (474 aa).

The Mn(2+) site is built by Glu-306, Glu-331, His-348, and His-447.

Belongs to the arabinose isomerase family. Mn(2+) is required as a cofactor.

The enzyme catalyses beta-L-arabinopyranose = L-ribulose. It functions in the pathway carbohydrate degradation; L-arabinose degradation via L-ribulose; D-xylulose 5-phosphate from L-arabinose (bacterial route): step 1/3. Functionally, catalyzes the conversion of L-arabinose to L-ribulose. The chain is L-arabinose isomerase 2 from Bacillus licheniformis (strain ATCC 14580 / DSM 13 / JCM 2505 / CCUG 7422 / NBRC 12200 / NCIMB 9375 / NCTC 10341 / NRRL NRS-1264 / Gibson 46).